Here is an 86-residue protein sequence, read N- to C-terminus: Small ribosomal subunit protein bS16 (86 aa).

This sequence belongs to the bacterial ribosomal protein bS16 family.

The chain is Small ribosomal subunit protein bS16 from Carboxydothermus hydrogenoformans (strain ATCC BAA-161 / DSM 6008 / Z-2901).